Reading from the N-terminus, the 161-residue chain is 2-C-methyl-D-erythritol 2,4-cyclodiphosphate synthase (161 aa).

The a divalent metal cation site is built by aspartate 10 and histidine 12. 4-CDP-2-C-methyl-D-erythritol 2-phosphate contacts are provided by residues 10-12 (DVH) and 36-37 (HS). Residue histidine 44 coordinates a divalent metal cation. Residues 58-60 (DIG), 63-67 (FPDTD), 102-108 (AQVPKMA), 134-137 (TTTE), phenylalanine 141, and arginine 144 contribute to the 4-CDP-2-C-methyl-D-erythritol 2-phosphate site.

The protein belongs to the IspF family. Homotrimer. A divalent metal cation is required as a cofactor.

The enzyme catalyses 4-CDP-2-C-methyl-D-erythritol 2-phosphate = 2-C-methyl-D-erythritol 2,4-cyclic diphosphate + CMP. It participates in isoprenoid biosynthesis; isopentenyl diphosphate biosynthesis via DXP pathway; isopentenyl diphosphate from 1-deoxy-D-xylulose 5-phosphate: step 4/6. Functionally, involved in the biosynthesis of isopentenyl diphosphate (IPP) and dimethylallyl diphosphate (DMAPP), two major building blocks of isoprenoid compounds. Catalyzes the conversion of 4-diphosphocytidyl-2-C-methyl-D-erythritol 2-phosphate (CDP-ME2P) to 2-C-methyl-D-erythritol 2,4-cyclodiphosphate (ME-CPP) with a corresponding release of cytidine 5-monophosphate (CMP). This Shewanella baltica (strain OS223) protein is 2-C-methyl-D-erythritol 2,4-cyclodiphosphate synthase.